Reading from the N-terminus, the 611-residue chain is Phosphoenolpyruvate carboxykinase [GTP] (611 aa).

Residues Arg82 and 222 to 224 (YGG) each bind substrate. Mn(2+) is bound by residues Lys231 and His251. A substrate-binding site is contributed by Ser273. 274 to 279 (ACGKTN) serves as a coordination point for GTP. Residue Cys275 is part of the active site. Position 298 (Asp298) interacts with Mn(2+). Residue 389–391 (NSR) participates in substrate binding. GTP-binding positions include Arg391, Arg422, and 517–520 (FGDN).

This sequence belongs to the phosphoenolpyruvate carboxykinase [GTP] family. Monomer. It depends on Mn(2+) as a cofactor.

Its subcellular location is the cytoplasm. It carries out the reaction oxaloacetate + GTP = phosphoenolpyruvate + GDP + CO2. The protein operates within carbohydrate biosynthesis; gluconeogenesis. In terms of biological role, catalyzes the conversion of oxaloacetate (OAA) to phosphoenolpyruvate (PEP), the rate-limiting step in the metabolic pathway that produces glucose from lactate and other precursors derived from the citric acid cycle. This chain is Phosphoenolpyruvate carboxykinase [GTP], found in Arthrobacter sp. (strain FB24).